We begin with the raw amino-acid sequence, 227 residues long: Transmembrane emp24 domain-containing protein 1 (227 aa).

An N-terminal signal peptide occupies residues 1–23 (MMAAGAALALALWLLMPPVEVGG). Residues 24 to 194 (AGPPPIQDGE…LQEGNLERVN (171 aa)) are Extracellular-facing. Positions 43–125 (KQCFYQSAPA…EKLVFFELIF (83 aa)) constitute a GOLD domain. A coiled-coil region spans residues 145-170 (EMLDVKMEDIKESIETMRTRLERSIQ). The helical transmembrane segment at 195 to 215 (FWSAVNVAVLLLVAVLQVCTL) threads the bilayer. At 216–227 (KRFFQDKRPVPT) the chain is on the cytoplasmic side. Residues 218–219 (FF) carry the COPII vesicle coat-binding motif. Residues 218–227 (FFQDKRPVPT) carry the COPI vesicle coat-binding motif.

This sequence belongs to the EMP24/GP25L family. In terms of assembly, homodimer in endoplasmic reticulum, endoplasmic reticulum-Golgi intermediate compartment and cis-Golgi network. Interacts with IL1RL1. Interacts with RNF26; this interaction is important to modulate innate immune signaling through the cGAS-STING pathway. As to expression, widely expressed.

It localises to the cell membrane. Its subcellular location is the endoplasmic reticulum membrane. The protein localises to the golgi apparatus. It is found in the cis-Golgi network membrane. The protein resides in the endoplasmic reticulum-Golgi intermediate compartment membrane. Functionally, potential role in vesicular protein trafficking, mainly in the early secretory pathway. May act as a cargo receptor at the lumenal side for incorporation of secretory cargo molecules into transport vesicles and may be involved in vesicle coat formation at the cytoplasmic side. Plays a positive role in IL-33-mediated IL-8 and IL-6 production by interacting with interleukin-33 receptor IL1RL1. Also plays a role in the modulation of innate immune signaling through the cGAS-STING pathway by interacting with RNF26. In Homo sapiens (Human), this protein is Transmembrane emp24 domain-containing protein 1 (TMED1).